The sequence spans 303 residues: Pseudouridine-5'-phosphate glycosidase (303 aa).

The Proton donor role is filled by Glu-25. 2 residues coordinate substrate: Lys-87 and Val-107. Asp-139 contributes to the Mn(2+) binding site. Residue 141-143 (SAD) coordinates substrate. Residue Lys-160 is the Nucleophile of the active site.

Belongs to the pseudouridine-5'-phosphate glycosidase family. As to quaternary structure, homotrimer. Mn(2+) is required as a cofactor.

The catalysed reaction is D-ribose 5-phosphate + uracil = psi-UMP + H2O. Catalyzes the reversible cleavage of pseudouridine 5'-phosphate (PsiMP) to ribose 5-phosphate and uracil. Functions biologically in the cleavage direction, as part of a pseudouridine degradation pathway. The chain is Pseudouridine-5'-phosphate glycosidase from Hahella chejuensis (strain KCTC 2396).